Reading from the N-terminus, the 211-residue chain is Arginine exporter protein ArgO (211 aa).

6 helical membrane-spanning segments follow: residues 1–21 (MISYYFQGFALGAAMILPLGP), 37–57 (LMIALLCALSDLVLISAGIFG), 68–88 (LLALVTWGGVAFLLWYGFGAL), 111–131 (IIATMLAVTWLNPHVYLDTFV), 147–167 (WFALGTISASFLWFFGLALLA), and 179–199 (AQRIINILVGVVMWLIAFQLA).

Belongs to the LysE/ArgO transporter (TC 2.A.75) family.

It is found in the cell inner membrane. The catalysed reaction is L-arginine(in) = L-arginine(out). In terms of biological role, involved in the export of arginine. Important to control the intracellular level of arginine and the correct balance between arginine and lysine. The chain is Arginine exporter protein ArgO from Salmonella newport (strain SL254).